Reading from the N-terminus, the 93-residue chain is Small ribosomal subunit protein uS19 (93 aa).

Residues 73–93 are disordered; it reads EFSPTRTFRGHVKDDRKSKRR. Over residues 83 to 93 the composition is skewed to basic and acidic residues; that stretch reads HVKDDRKSKRR.

It belongs to the universal ribosomal protein uS19 family.

Protein S19 forms a complex with S13 that binds strongly to the 16S ribosomal RNA. The polypeptide is Small ribosomal subunit protein uS19 (Streptomyces coelicolor (strain ATCC BAA-471 / A3(2) / M145)).